The chain runs to 1038 residues: E3 ubiquitin-protein ligase Topors (1038 aa).

Residues E53–N96 are disordered. The RING-type zinc finger occupies C102–K141. Positions A495–E682 are interaction with hairy/hry. Disordered regions lie at residues D627–A858 and G972–Y1038. Residues R633–R642 show a composition bias toward basic residues. Low complexity predominate over residues S643–S668. Positions K686–K699 are enriched in basic residues. A compositionally biased stretch (low complexity) spans Q723–S744. Residues A792–K801 show a composition bias toward basic and acidic residues. T820 bears the Phosphothreonine mark. S822 bears the Phosphoserine mark. A compositionally biased stretch (low complexity) spans S841–A858. A compositionally biased stretch (acidic residues) spans E987 to E1031.

Interacts with hairy/hry, p53 and Top1. Interacts with the gypsy chromatin insulator complex, composed of Cp190, mod(mdg4) and su(Hw); interacts directly with mod(mdg4) and su(Hw). Interacts with Lam/lamin.

It localises to the nucleus. The protein resides in the chromosome. It carries out the reaction S-ubiquitinyl-[E2 ubiquitin-conjugating enzyme]-L-cysteine + [acceptor protein]-L-lysine = [E2 ubiquitin-conjugating enzyme]-L-cysteine + N(6)-ubiquitinyl-[acceptor protein]-L-lysine.. Functionally, functions as a ubiquitin-protein E3 ligase. Negatively regulates the transcriptional repressor hairy/hry by promoting its ubiquitination and subsequent degradation. Also directs the nuclear organization of the gypsy chromatin insulator. Chromatin insulators are regulatory elements which establish independent domains of transcriptional activity within eukaryotic genomes. Insulators have two defining properties; they can block the communication between an enhancer and a promoter when placed between them, and can also buffer transgenes from position effect variegation (PEV). Insulators are proposed to structure the chromatin fiber into independent domains of differing transcriptional potential by promoting the formation of distinct chromatin loops. This chromatin looping may require the formation of insulator bodies, where homotypic interactions between individual subunits of the insulator complex could promote the clustering of widely spaced insulators at the nuclear periphery. Within the gypsy insulator complex, this protein may promote formation of nuclear insulator bodies by recruiting individual insulator complexes to the nuclear lamina. This chain is E3 ubiquitin-protein ligase Topors (Topors), found in Drosophila melanogaster (Fruit fly).